We begin with the raw amino-acid sequence, 458 residues long: MAGNAGVAEAWTVSEATRYIKQLLEDDPHLPEIWIRGELSNFKQHTRGHMYFTIKDEGSRMQAVMFAGYNRFLRFKPENGMNVLIRGEINVYEPYGQYQFYAKEMQPDGIGSLFAEYERLKKALEAEGLFAEERKRPIPRFPTHIAIITSPTGAVIRDMMTTLKRRYPQIRVTLFPVLVQGEGAPLSISRALEQASMANIFDVVIVARGGGSIEELWAFNEEMVARAIAEAAVPVISAVGHETDFTISDFAADRRAPTPTAAAEFAVPDARELMEHIGHLKKRLERSLVEQVKTRRRELERLKRSYAFRYPVQLVHQKEQQLDGLMERLNRAMQIKLEQKTLAFKHMNQAILRQHPATRVSQLQKERRQNHARLVRAMAAETQRKRQSLSAVIQQLQLLSPLAVMDRGYSLVYKDEALVKTAKDVEIEDDIVVKLADGNLHCQVVGKREMKNGGESNG.

This sequence belongs to the XseA family. Heterooligomer composed of large and small subunits.

Its subcellular location is the cytoplasm. The catalysed reaction is Exonucleolytic cleavage in either 5'- to 3'- or 3'- to 5'-direction to yield nucleoside 5'-phosphates.. Functionally, bidirectionally degrades single-stranded DNA into large acid-insoluble oligonucleotides, which are then degraded further into small acid-soluble oligonucleotides. In Shouchella clausii (strain KSM-K16) (Alkalihalobacillus clausii), this protein is Exodeoxyribonuclease 7 large subunit.